Consider the following 241-residue polypeptide: tRNA (cytidine/uridine-2'-O-)-methyltransferase TrmJ (241 aa).

Residues 79 to 81 (TSA), Gly114, Ile134, and 141 to 143 (GSL) contribute to the S-adenosyl-L-methionine site.

It belongs to the class IV-like SAM-binding methyltransferase superfamily. RNA methyltransferase TrmH family. As to quaternary structure, homodimer.

The protein localises to the cytoplasm. It catalyses the reaction cytidine(32) in tRNA + S-adenosyl-L-methionine = 2'-O-methylcytidine(32) in tRNA + S-adenosyl-L-homocysteine + H(+). It carries out the reaction uridine(32) in tRNA + S-adenosyl-L-methionine = 2'-O-methyluridine(32) in tRNA + S-adenosyl-L-homocysteine + H(+). Its function is as follows. Catalyzes the formation of 2'O-methylated cytidine (Cm32) or 2'O-methylated uridine (Um32) at position 32 in tRNA. The polypeptide is tRNA (cytidine/uridine-2'-O-)-methyltransferase TrmJ (trmJ) (Photorhabdus laumondii subsp. laumondii (strain DSM 15139 / CIP 105565 / TT01) (Photorhabdus luminescens subsp. laumondii)).